Reading from the N-terminus, the 112-residue chain is Putative pterin-4-alpha-carbinolamine dehydratase (112 aa).

It belongs to the pterin-4-alpha-carbinolamine dehydratase family.

It carries out the reaction (4aS,6R)-4a-hydroxy-L-erythro-5,6,7,8-tetrahydrobiopterin = (6R)-L-erythro-6,7-dihydrobiopterin + H2O. The polypeptide is Putative pterin-4-alpha-carbinolamine dehydratase (Shewanella sp. (strain MR-7)).